The following is a 142-amino-acid chain: Small ribosomal subunit protein uS9 (142 aa).

This sequence belongs to the universal ribosomal protein uS9 family.

This Debaryomyces hansenii (strain ATCC 36239 / CBS 767 / BCRC 21394 / JCM 1990 / NBRC 0083 / IGC 2968) (Yeast) protein is Small ribosomal subunit protein uS9 (RPS16).